The sequence spans 227 residues: GRF-interacting factor 1 (227 aa).

Residues 186–227 (RSGSGAKEGSTSLSVDVRGGTSSGAQSGDGEYLKVGTEEEGS) are disordered.

Belongs to the SS18 family. Interacts with several GRFs. Interacts with GRF10. Interacts with GRF1. Expressed in shoots, aerial roots, ears and tassels. Expressed in the shoot apical meristem (SAM), young leaf primordia, leaf margins, inflorescence meristem, floral meristem and spikelet meristem.

Transcription coactivator that plays a role in the regulation of meristematic function in leaves, stems and inflorescences. Regulates shoot architecture and meristem determinacy. Binds to the inflorescence architecture gene UB3 (unbranched3). Regulates the expression of several genes involved in inflorescence architecture. Component of a network formed by the microRNA396 (miRNA396), the GRFs and their interacting factors (GIFs) acting in the regulation of meristem function, at least partially through the control of cell proliferation. Associates with the core SWI/SNF chromatin-remodeling complex and specific GRFs to tightly regulate the transition between cell division and cell expansion in growing leaves. The polypeptide is GRF-interacting factor 1 (Zea mays (Maize)).